Here is a 121-residue protein sequence, read N- to C-terminus: Large ribosomal subunit protein uL14c (121 aa).

It belongs to the universal ribosomal protein uL14 family. As to quaternary structure, part of the 50S ribosomal subunit.

It localises to the plastid. The protein resides in the chloroplast. Its function is as follows. Binds to 23S rRNA. The sequence is that of Large ribosomal subunit protein uL14c from Phaeodactylum tricornutum (strain CCAP 1055/1).